Here is a 324-residue protein sequence, read N- to C-terminus: Adenine deaminase (324 aa).

The Zn(2+) site is built by H8, H10, and H186. Catalysis depends on E189, which acts as the Proton donor. D267 provides a ligand contact to Zn(2+). D268 serves as a coordination point for substrate.

It belongs to the metallo-dependent hydrolases superfamily. Adenosine and AMP deaminases family. Adenine deaminase type 2 subfamily. Zn(2+) serves as cofactor.

The enzyme catalyses adenine + H2O + H(+) = hypoxanthine + NH4(+). In terms of biological role, catalyzes the hydrolytic deamination of adenine to hypoxanthine. Plays an important role in the purine salvage pathway and in nitrogen catabolism. In Mesorhizobium japonicum (strain LMG 29417 / CECT 9101 / MAFF 303099) (Mesorhizobium loti (strain MAFF 303099)), this protein is Adenine deaminase.